Here is a 142-residue protein sequence, read N- to C-terminus: Universal stress protein G (142 aa).

It belongs to the universal stress protein A family.

In Salmonella typhi, this protein is Universal stress protein G (uspG).